Reading from the N-terminus, the 156-residue chain is Cell division protein SepF (156 aa).

The span at 23 to 36 shows a compositional bias: basic and acidic residues; it reads SYEKEQTDMKKQQD. A disordered region spans residues 23–50; that stretch reads SYEKEQTDMKKQQDPPEQQDVTFPKAQP.

This sequence belongs to the SepF family. As to quaternary structure, homodimer. Interacts with FtsZ.

The protein resides in the cytoplasm. In terms of biological role, cell division protein that is part of the divisome complex and is recruited early to the Z-ring. Probably stimulates Z-ring formation, perhaps through the cross-linking of FtsZ protofilaments. Its function overlaps with FtsA. The chain is Cell division protein SepF from Bacillus thuringiensis (strain Al Hakam).